Here is a 1178-residue protein sequence, read N- to C-terminus: Topoisomerase 1-associated factor 1 (1178 aa).

4 disordered regions span residues 576–596, 792–811, 896–965, and 980–1178; these read KQDDQAIDVEDEEHASEDEEL, SWESREQQPGEPTAPNPMIP, DARG…VLEE, and KIKS…SDSE. Acidic residues predominate over residues 580–596; the sequence is QAIDVEDEEHASEDEEL. The span at 896 to 905 shows a compositional bias: basic and acidic residues; the sequence is DARGGGRDEQ. A compositionally biased stretch (acidic residues) spans 911–921; the sequence is FGSDSEGEDNV. Basic and acidic residues-rich tracts occupy residues 981 to 991, 1001 to 1015, and 1025 to 1034; these read IKSDLYIHASD, EFFRLEEQRRKEQAA, and VVEEISDKSS. Residues 1079 to 1092 are compositionally biased toward polar residues; it reads EAQSPDSPGLGSSS. Positions 1105–1116 are enriched in acidic residues; the sequence is SDEDELEFDDDL. Residues 1117–1128 show a composition bias toward basic and acidic residues; it reads AFSRDRNRRKDF. Residues 1138-1147 are compositionally biased toward low complexity; the sequence is EPAQQDADPA. Residues 1148–1157 are compositionally biased toward acidic residues; it reads APDEDDDEDA.

It belongs to the timeless family. As to quaternary structure, component of the fork protection complex (FPC) consisting of tof1 and csm3.

It is found in the nucleus. Forms a fork protection complex (FPC) with csm3 and which is required for chromosome segregation during meiosis and DNA damage repair. FPC coordinates leading and lagging strand synthesis and moves with the replication fork. FPC stabilizes replication forks in a configuration that is recognized by replication checkpoint sensors. In Aspergillus clavatus (strain ATCC 1007 / CBS 513.65 / DSM 816 / NCTC 3887 / NRRL 1 / QM 1276 / 107), this protein is Topoisomerase 1-associated factor 1 (tof1).